The sequence spans 147 residues: uncharacterized protein (147 aa).

It to M.pneumoniae MPN_465.

This is an uncharacterized protein from Mycoplasma pneumoniae (strain ATCC 29342 / M129 / Subtype 1) (Mycoplasmoides pneumoniae).